A 214-amino-acid chain; its full sequence is Probable transaldolase 1 (214 aa).

The active-site Schiff-base intermediate with substrate is lysine 83.

It belongs to the transaldolase family. Type 3B subfamily.

The protein resides in the cytoplasm. It catalyses the reaction D-sedoheptulose 7-phosphate + D-glyceraldehyde 3-phosphate = D-erythrose 4-phosphate + beta-D-fructose 6-phosphate. It functions in the pathway carbohydrate degradation; pentose phosphate pathway; D-glyceraldehyde 3-phosphate and beta-D-fructose 6-phosphate from D-ribose 5-phosphate and D-xylulose 5-phosphate (non-oxidative stage): step 2/3. Transaldolase is important for the balance of metabolites in the pentose-phosphate pathway. This Listeria monocytogenes serotype 4b (strain F2365) protein is Probable transaldolase 1.